We begin with the raw amino-acid sequence, 404 residues long: Odorant receptor 74a (404 aa).

The Cytoplasmic portion of the chain corresponds to 1–38 (MSFHRYRPRLPGGELAPMPWPVSLYRVLNHVAWPLEAE). The chain crosses the membrane as a helical span at residues 39-59 (SGRWTVFLDRLMIFLGFLVFC). Over 60–67 (EHNEVDFH) the chain is Extracellular. The chain crosses the membrane as a helical span at residues 68–88 (YLIANRQDMDNMLTGLPTYLI). The Cytoplasmic segment spans residues 89–141 (LVEMQIRCFQLAWHKDRFRALLQRFYAEIYVSEEMEPHLFASIQRQMLATRVN). Residues 142–162 (STVYLLALLNFFLVPVTNVIY) traverse the membrane as a helical segment. Residues 163-181 (HRREMLYKQVYPFDNTQLH) lie on the Extracellular side of the membrane. A helical membrane pass occupies residues 182 to 202 (FFIPLLVLNFWVGFIITSMLF). Over 203 to 274 (GELNVMGELM…QRVEKEFTLR (72 aa)) the chain is Cytoplasmic. Residues 275–295 (IFVMFAFSAGLLCALFFKAFT) traverse the membrane as a helical segment. Residues 296–303 (NPWGNVAY) are Extracellular-facing. A helical membrane pass occupies residues 304–324 (IVWFLAKFMELLALGMLGSIL). The Cytoplasmic segment spans residues 325 to 380 (LKTTDELGMMYYTADWEQVIHQSDNVGENVKLMKLVTLAIQLNSRPFFITGLNYFR). A helical membrane pass occupies residues 381-401 (VSLTAVLKIIQGAFSYFTFLN). The Extracellular portion of the chain corresponds to 402–404 (SMR).

It belongs to the insect chemoreceptor superfamily. Heteromeric odorant receptor channel (TC 1.A.69) family. Or1a subfamily. Interacts with Orco. Complexes exist early in the endomembrane system in olfactory sensory neurons (OSNs), coupling these complexes to the conserved ciliary trafficking pathway.

The protein localises to the cell membrane. Its function is as follows. Odorant receptor which mediates acceptance or avoidance behavior, depending on its substrates. The odorant receptor repertoire encodes a large collection of odor stimuli that vary widely in identity, intensity, and duration. May form a complex with Orco to form odorant-sensing units, providing sensitive and prolonged odorant signaling and calcium permeability. Involved in the behavioral responses to octanol, anisole, and 2-heptanone. This is Odorant receptor 74a (Or74a) from Drosophila melanogaster (Fruit fly).